Reading from the N-terminus, the 275-residue chain is NAC domain-containing protein 2 (275 aa).

The NAC domain maps to 10-162 (LPPGFRFHPT…DWVLCRIYKK (153 aa)). Residues 107-168 (VGIKKALVFY…IYKKKNLERA (62 aa)) mediate DNA binding.

As to expression, expressed in roots, stem, flowers, and leaves.

The protein resides in the nucleus. Functionally, transcription factor that binds DNA motifs 5'-CGT[AG](5N)NACG[ACT][AC][AT][ACG][ACT]-3' and 5'-CACG[ACT][AC][AT][AGT][CT]-3' in target genes promoters. Promotes leaf senescence (developmental, light-induced and ABA-induced senescence) and regulates fruit yield and sugar content, probably by establishing abscisic acid (ABA) homeostasis. Activates the expression of senescence and ABA associated genes including NCED1, ABCG40, CYP707A2, SAG113, SGR1 and PAO, by directly binding to their promoters. The protein is NAC domain-containing protein 2 of Solanum lycopersicum (Tomato).